Reading from the N-terminus, the 391-residue chain is Lipoyl synthase, mitochondrial (391 aa).

The N-terminal 44 residues, 1–44, are a transit peptide targeting the mitochondrion; that stretch reads MVHPHLSRTKRTFFSHSSQMISRHIRKTNSLAFVRALSASETAV. [4Fe-4S] cluster contacts are provided by C120, C125, C131, C150, C154, C157, and S365. In terms of domain architecture, Radical SAM core spans 135 to 354; sequence KKSEATATIM…KEVALEMGFL (220 aa).

It belongs to the radical SAM superfamily. Lipoyl synthase family. The cofactor is [4Fe-4S] cluster.

It localises to the mitochondrion. The catalysed reaction is [[Fe-S] cluster scaffold protein carrying a second [4Fe-4S](2+) cluster] + N(6)-octanoyl-L-lysyl-[protein] + 2 oxidized [2Fe-2S]-[ferredoxin] + 2 S-adenosyl-L-methionine + 4 H(+) = [[Fe-S] cluster scaffold protein] + N(6)-[(R)-dihydrolipoyl]-L-lysyl-[protein] + 4 Fe(3+) + 2 hydrogen sulfide + 2 5'-deoxyadenosine + 2 L-methionine + 2 reduced [2Fe-2S]-[ferredoxin]. It functions in the pathway protein modification; protein lipoylation via endogenous pathway; protein N(6)-(lipoyl)lysine from octanoyl-[acyl-carrier-protein]: step 2/2. Functionally, catalyzes the radical-mediated insertion of two sulfur atoms into the C-6 and C-8 positions of the octanoyl moiety bound to the lipoyl domains of lipoate-dependent enzymes, thereby converting the octanoylated domains into lipoylated derivatives. This Clavispora lusitaniae (strain ATCC 42720) (Yeast) protein is Lipoyl synthase, mitochondrial.